Reading from the N-terminus, the 197-residue chain is Gene 49 protein (197 aa).

2 disordered regions span residues 1–49 (MRGN…EVRP) and 114–157 (FANL…RFCK). Over residues 117–135 (LGGGSKPNSGGGGSGGGGQ) the composition is skewed to gly residues. A compositionally biased stretch (low complexity) spans 136–146 (QHQSRAPQQAQ).

In Mycobacterium phage D29 (Mycobacteriophage D29), this protein is Gene 49 protein (49).